The sequence spans 593 residues: Autophagy-related protein 22-2 (593 aa).

A helical transmembrane segment spans residues 42 to 62 (YGVAAEVFAVCGVGSFLPLTL). Asn90 carries N-linked (GlcNAc...) asparagine glycosylation. Helical transmembrane passes span 112–132 (SFAM…LVSF), 159–179 (LFML…VIGV), and 181–201 (CLGS…ANDP). The tract at residues 228-261 (SWTDEEDTGDHAGPAGSKKAVEPEKASSSTSPEL) is disordered. Transmembrane regions (helical) follow at residues 271–291 (GVGL…LLLF), 305–325 (LPLR…TVVC), 377–397 (VVVF…VSGT), and 415–435 (LLSI…PIVA). Asn443 carries an N-linked (GlcNAc...) asparagine glycan. A run of 4 helical transmembrane segments spans residues 448–468 (LCIA…IPFI), 480–500 (WEIF…ASYC), 525–545 (KGSS…TGSV), and 548–568 (GFIF…LVNA).

This sequence belongs to the ATG22 family.

Its subcellular location is the vacuole membrane. Functionally, vacuolar effluxer which mediate the efflux of amino acids resulting from autophagic degradation. The release of autophagic amino acids allows the maintenance of protein synthesis and viability during nitrogen starvation. This Emericella nidulans (strain FGSC A4 / ATCC 38163 / CBS 112.46 / NRRL 194 / M139) (Aspergillus nidulans) protein is Autophagy-related protein 22-2 (atg22-2).